The chain runs to 365 residues: UDP-N-acetylglucosamine--N-acetylmuramyl-(pentapeptide) pyrophosphoryl-undecaprenol N-acetylglucosamine transferase (365 aa).

UDP-N-acetyl-alpha-D-glucosamine-binding positions include 19–21 (TGG), N131, R170, S201, I255, 274–279 (ALTVTE), and Q300.

It belongs to the glycosyltransferase 28 family. MurG subfamily.

Its subcellular location is the cell inner membrane. It catalyses the reaction di-trans,octa-cis-undecaprenyl diphospho-N-acetyl-alpha-D-muramoyl-L-alanyl-D-glutamyl-meso-2,6-diaminopimeloyl-D-alanyl-D-alanine + UDP-N-acetyl-alpha-D-glucosamine = di-trans,octa-cis-undecaprenyl diphospho-[N-acetyl-alpha-D-glucosaminyl-(1-&gt;4)]-N-acetyl-alpha-D-muramoyl-L-alanyl-D-glutamyl-meso-2,6-diaminopimeloyl-D-alanyl-D-alanine + UDP + H(+). The protein operates within cell wall biogenesis; peptidoglycan biosynthesis. Cell wall formation. Catalyzes the transfer of a GlcNAc subunit on undecaprenyl-pyrophosphoryl-MurNAc-pentapeptide (lipid intermediate I) to form undecaprenyl-pyrophosphoryl-MurNAc-(pentapeptide)GlcNAc (lipid intermediate II). This is UDP-N-acetylglucosamine--N-acetylmuramyl-(pentapeptide) pyrophosphoryl-undecaprenol N-acetylglucosamine transferase from Acinetobacter baylyi (strain ATCC 33305 / BD413 / ADP1).